We begin with the raw amino-acid sequence, 341 residues long: Phenylalanine--tRNA ligase alpha subunit (341 aa).

Residue Glu-256 coordinates Mg(2+).

The protein belongs to the class-II aminoacyl-tRNA synthetase family. Phe-tRNA synthetase alpha subunit type 1 subfamily. Tetramer of two alpha and two beta subunits. The cofactor is Mg(2+).

It localises to the cytoplasm. The catalysed reaction is tRNA(Phe) + L-phenylalanine + ATP = L-phenylalanyl-tRNA(Phe) + AMP + diphosphate + H(+). The protein is Phenylalanine--tRNA ligase alpha subunit (pheS) of Chlamydia muridarum (strain MoPn / Nigg).